The following is a 988-amino-acid chain: Echinoderm microtubule-associated protein-like 4 (988 aa).

Met1 carries the N-acetylmethionine modification. Positions 1-260 (MDGFAGSLDD…IPSDVDNYDD (260 aa)) are microtubule-binding. Phosphoserine is present on residues Ser7, Ser13, Ser16, Ser61, and Ser79. The stretch at 14 to 63 (AASTSDVQDRLSALESRVQQQEDEITVLKAALADVLRRLAISEDHVASVK) forms a coiled coil. The residue at position 96 (Thr96) is a Phosphothreonine. Residues 106-194 (TLSSAAKSGT…WENSDDSRNK (89 aa)) form a disordered region. Basic and acidic residues predominate over residues 114–134 (GTEKKKEKPQGQREKKEDSHS). The residue at position 134 (Ser134) is a Phosphoserine; by NEK7. A compositionally biased stretch (low complexity) spans 137–155 (QSPQIRASPSPQPSSQPLQ). Ser144 is modified (phosphoserine; by NEK6). At Ser146 the chain carries Phosphoserine; by NEK7. Polar residues predominate over residues 156–168 (INRQTPESKSSAP). Phosphoserine is present on Ser171. The span at 176 to 193 (PTAEKSHNSWENSDDSRN) shows a compositional bias: basic and acidic residues. Ser200 carries the post-translational modification Phosphoserine. Phosphothreonine is present on Thr201. The residue at position 237 (Tyr237) is a Phosphotyrosine. At Thr248 the chain carries Phosphothreonine. 13 WD repeats span residues 270–308 (LKLEWVYGYRGKDCRANVYLLPTGEIVYFIASVVVLFNY), 312–359 (TQRH…VWDS), 367–407 (VIGL…VWDW), 414–449 (AEIKTTNEVVLAVEFHPTDANTIITCGKSHIFFWTW), 456–495 (RKQGIFGKYEKPKFVQCLAFLGNGDVLTGDSGGVMLIWSK), 511–549 (QINRQIKAHDGSVFTLCQMRNGMLLTGGGKDRKIILWDH), 554–590 (EREIEVPDQYGTIRAVAEGRAEQFLVGTSRNFILRGT), 593–632 (DGFQIEVQGHRDELWGLATHPFKDLLLTCAQDRQVCMWNS), 636–673 (RLEWTRLVDEPGHCADFHPSGTVVAIGTHSGRWFVLDA), 679–715 (VSIHTDGNEQLSVMRYSVDGTLLAVGSHDNFIYLYTV), 722–761 (YSRYGKCTGHSSYITHLDWSPDNKHIMSNSGDYEILYWDI), 771–829 (RSDC…LFQY), and 836–875 (APSHKYSAHSSHVTNVSFTHNDSHLISTGGKDMSIIQWKL). Position 620 is a phosphothreonine; by NEK6 and NEK7 (Thr620). A disordered region spans residues 887–988 (ITDASVTKTP…EEERGITPLC (102 aa)). Over residues 890–904 (ASVTKTPASSSETAR) the composition is skewed to polar residues. Ser906, Ser908, and Ser914 each carry phosphoserine. Residues 927–939 (MGSSPTLVENSLE) are compositionally biased toward polar residues. A compositionally biased stretch (acidic residues) spans 944-953 (PSEEQSEWGS).

The protein belongs to the WD repeat EMAP family. As to quaternary structure, homotrimer; self-association is mediated by the N-terminal coiled coil. Interacts (via WD repeats) with NUDC. Interacts with alpha- and beta-tubulin during mitosis. Post-translationally, phosphorylated during mitosis. Phosphorylation at Ser-144 and Ser-146 promotes its dissociation from microtubules during mitosis which is required for efficient chromosome congression.

The protein resides in the cytoplasm. It is found in the cytoskeleton. Its subcellular location is the spindle. The protein localises to the microtubule organizing center. It localises to the midbody. Essential for the stability of microtubules (MTs). Essential for the formation of MTs. Required for the organization of the mitotic spindle and for the proper attachment of kinetochores to MTs. Promotes the recruitment of NUDC to the mitotic spindle for mitotic progression. The polypeptide is Echinoderm microtubule-associated protein-like 4 (Eml4) (Mus musculus (Mouse)).